Consider the following 255-residue polypeptide: Small ribosomal subunit protein eS1 (255 aa).

Over residues 1-18 the composition is skewed to basic residues; that stretch reads MAVGKNKRLSKGKKGLKK. The segment at 1–22 is disordered; it reads MAVGKNKRLSKGKKGLKKRAQD. The residue at position 2 (Ala-2) is an N-acetylalanine; partial.

Belongs to the eukaryotic ribosomal protein eS1 family. Component of the small ribosomal subunit. Mature ribosomes consist of a small (40S) and a large (60S) subunit. The 40S subunit contains about 33 different proteins and 1 molecule of RNA (18S). The 60S subunit contains about 49 different proteins and 3 molecules of RNA (25S, 5.8S and 5S).

The protein resides in the cytoplasm. The polypeptide is Small ribosomal subunit protein eS1 (Uncinocarpus reesii (strain UAMH 1704)).